We begin with the raw amino-acid sequence, 163 residues long: UPF0262 protein RPD_4278 (163 aa).

Belongs to the UPF0262 family.

The chain is UPF0262 protein RPD_4278 from Rhodopseudomonas palustris (strain BisB5).